The chain runs to 84 residues: MENIITATIFGSVILLAAAALGTAIGFSLLGGKFLESSARQPELAASLQTKMFIVAGLLDAISMIAVGIALLFIFANPFIGLLN.

2 helical membrane-spanning segments follow: residues 9 to 29 and 54 to 74; these read IFGSVILLAAAALGTAIGFSL and IVAGLLDAISMIAVGIALLFI.

It belongs to the ATPase C chain family. In terms of assembly, F-type ATPases have 2 components, F(1) - the catalytic core - and F(0) - the membrane proton channel. F(1) has five subunits: alpha(3), beta(3), gamma(1), delta(1), epsilon(1). F(0) has three main subunits: a(1), b(2) and c(10-14). The alpha and beta chains form an alternating ring which encloses part of the gamma chain. F(1) is attached to F(0) by a central stalk formed by the gamma and epsilon chains, while a peripheral stalk is formed by the delta and b chains.

Its subcellular location is the cell inner membrane. Functionally, f(1)F(0) ATP synthase produces ATP from ADP in the presence of a proton or sodium gradient. F-type ATPases consist of two structural domains, F(1) containing the extramembraneous catalytic core and F(0) containing the membrane proton channel, linked together by a central stalk and a peripheral stalk. During catalysis, ATP synthesis in the catalytic domain of F(1) is coupled via a rotary mechanism of the central stalk subunits to proton translocation. In terms of biological role, key component of the F(0) channel; it plays a direct role in translocation across the membrane. A homomeric c-ring of between 10-14 subunits forms the central stalk rotor element with the F(1) delta and epsilon subunits. The polypeptide is ATP synthase subunit c (Histophilus somni (strain 2336) (Haemophilus somnus)).